The chain runs to 246 residues: UPF0309 protein OB3413 (246 aa).

Residues 33–212 (MATAVMNGNS…VLKMIEIFEE (180 aa)) enclose the SIS domain.

The protein belongs to the UPF0309 family.

This is UPF0309 protein OB3413 from Oceanobacillus iheyensis (strain DSM 14371 / CIP 107618 / JCM 11309 / KCTC 3954 / HTE831).